The chain runs to 447 residues: MMNMKEDKKNTMDMKNMKHHDERKKLNSSQGKNEIIFPEVAESKKDNNGYKNYTLKAQEGKTEFYKNNFSNTLGYNGNLLGPTLKLKKGDKVKIKLINNLDENTTFHWHGLEINGKVDGGPSQVIKPGKEKTIKFEVNQDSATLWYHPHPSPNTAKQVYNGLSGLLYIEDSKKNNYPSNYGKNDLPIIIQDKTFVSKKLNYSKTKDEDGTQGDTVLVNGIVNPKLTAKEEKIRLRLLNGSNARDLNLKLSNNQSFEYIASDGGQLKNAKKLKEINLAPSERKEIVIDLSKMKGEKISLVDNDKTVILPISNKEKSSNKGNTPKVSKKIKLEGMNDHVTINGNKFDPNRIDFTQKLNQKEVWEIENVKDKMGGMKHPFHIHGTQFKVLSVDGEKPPKDMRGKKDVISLEPGQKAKIEVVFKNTGTYMFHCHILEHEENGMMGQIKVTN.

A compositionally biased stretch (basic and acidic residues) spans 1-25 (MMNMKEDKKNTMDMKNMKHHDERKK). The segment at 1 to 28 (MMNMKEDKKNTMDMKNMKHHDERKKLNS) is disordered. The Cu cation site is built by histidine 107, histidine 109, histidine 147, histidine 149, histidine 375, histidine 378, histidine 380, histidine 428, cysteine 429, histidine 430, histidine 434, and methionine 439.

The protein belongs to the multicopper oxidase family. Cu cation serves as cofactor.

It localises to the cytoplasm. Functionally, may be involved in copper homeostasis and oxidative stress response. The polypeptide is Multicopper oxidase mco (mco) (Staphylococcus epidermidis (strain ATCC 12228 / FDA PCI 1200)).